The sequence spans 112 residues: MMLVTAHDMPIFAPTCNLMTISHQPLPSHLVRKSSSLHIAASTIHVKFIVRSHVIKMIAGIFLVCECHAKGGANSITASKQSPIIADLYDMKILIVFCLSYTNLIASKVKKQ.

This is an uncharacterized protein from Saccharomyces cerevisiae (strain ATCC 204508 / S288c) (Baker's yeast).